A 113-amino-acid chain; its full sequence is Replication initiation control protein YabA (113 aa).

Zn(2+) contacts are provided by His88, Cys90, Cys104, and Cys107.

It belongs to the YabA family. In terms of assembly, homotetramer. Interacts with both DnaA and DnaN, acting as a bridge between these two proteins. It depends on Zn(2+) as a cofactor.

Its subcellular location is the cytoplasm. It is found in the nucleoid. Involved in control of chromosome replication initiation. Inhibits the cooperative binding of DnaA to the oriC region, thus negatively regulating initiation of chromosome replication. Inhibits the ability of DnaA-ATP to form a helix on DNA; does not disassemble preformed DnaA-DNA helices. Decreases the residence time of DnaA on the chromosome at its binding sites (oriC, replication forks and promoter-binding sites). Tethers DnaA to the replication machinery via the DNA polymerase beta sliding clamp subunit (dnaN). Associates with oriC and other DnaA targets on the chromosome in a DnaA-dependent manner. This is Replication initiation control protein YabA from Staphylococcus saprophyticus subsp. saprophyticus (strain ATCC 15305 / DSM 20229 / NCIMB 8711 / NCTC 7292 / S-41).